Here is a 248-residue protein sequence, read N- to C-terminus: Probable transcriptional regulatory protein Nwi_2729 (248 aa).

Positions 1–21 are disordered; the sequence is MAGHSQFKNIMHRKGRQDAQK.

It belongs to the TACO1 family.

It localises to the cytoplasm. The protein is Probable transcriptional regulatory protein Nwi_2729 of Nitrobacter winogradskyi (strain ATCC 25391 / DSM 10237 / CIP 104748 / NCIMB 11846 / Nb-255).